The chain runs to 458 residues: Putative long chain fatty acid-CoA ligase VraA (458 aa).

It belongs to the ATP-dependent AMP-binding enzyme family.

The chain is Putative long chain fatty acid-CoA ligase VraA (vraA) from Staphylococcus aureus (strain MRSA252).